Consider the following 524-residue polypeptide: Rho guanine nucleotide exchange factor 3 (524 aa).

Phosphoserine occurs at positions 46 and 69. Residues 121–303 (KRQEAIFELS…QGIVAEINTK (183 aa)) enclose the DH domain. The PH domain occupies 290–448 (INIIQGIVAE…WLNCIRQAKE (159 aa)). The segment at 461 to 524 (DSEGLVQGPG…CANSRPEESV (64 aa)) is disordered. Over residues 472-484 (ENREPQGETKLEQ) the composition is skewed to basic and acidic residues.

Interacts with RHOA and RHOB.

It is found in the cytoplasm. Its function is as follows. Acts as a guanine nucleotide exchange factor (GEF) for RhoA and RhoB GTPases. The polypeptide is Rho guanine nucleotide exchange factor 3 (Arhgef3) (Mus musculus (Mouse)).